An 865-amino-acid chain; its full sequence is Protein translocase subunit SecA (865 aa).

ATP is bound by residues Q85, 103–107 (GEGKT), and D505. Zn(2+) is bound by residues C847, C849, C858, and H859.

It belongs to the SecA family. Monomer and homodimer. Part of the essential Sec protein translocation apparatus which comprises SecA, SecYEG and auxiliary proteins SecDF. Other proteins may also be involved. Zn(2+) is required as a cofactor.

Its subcellular location is the cell membrane. It is found in the cytoplasm. It catalyses the reaction ATP + H2O + cellular proteinSide 1 = ADP + phosphate + cellular proteinSide 2.. Part of the Sec protein translocase complex. Interacts with the SecYEG preprotein conducting channel. Has a central role in coupling the hydrolysis of ATP to the transfer of proteins into and across the cell membrane, serving as an ATP-driven molecular motor driving the stepwise translocation of polypeptide chains across the membrane. The protein is Protein translocase subunit SecA of Lactococcus lactis subsp. cremoris (strain SK11).